We begin with the raw amino-acid sequence, 82 residues long: Conotoxin MiK42 (82 aa).

The first 22 residues, 1-22 (MKLTCALIVAMLLLTACQLITT), serve as a signal peptide directing secretion. Residues 23–49 (DDFRGRQQYRTARSRTKMQNYKIFRLT) constitute a propeptide that is removed on maturation. Disulfide bonds link Cys-52/Cys-67, Cys-59/Cys-70, and Cys-66/Cys-80.

It belongs to the conotoxin O1 superfamily. In terms of tissue distribution, expressed by the venom duct.

The protein resides in the secreted. The polypeptide is Conotoxin MiK42 (Conus miles (Soldier cone)).